The primary structure comprises 451 residues: Jacalin-related lectin 35 (451 aa).

N-acetylalanine is present on Ala-2. 3 Jacalin-type lectin domains span residues 2–143, 156–297, and 306–448; these read AKKL…YIIP, LTKL…YIIP, and SNTI…NVAP.

This sequence belongs to the jacalin lectin family. Component of the PYK10 complex, at least composed of PYK10/BGLU23, BGLU21, BGLU22, JAL22, JAL23, PBP1/JAL30, PBP2/JAL31, JAL32, JAL33, JAL34, JAL35, GLL22 and GLL23.

This is Jacalin-related lectin 35 (JAL35) from Arabidopsis thaliana (Mouse-ear cress).